We begin with the raw amino-acid sequence, 383 residues long: Multidrug resistance protein MexA (383 aa).

Positions 1-23 are cleaved as a signal peptide; sequence MQRTPAMRVLVPALLVAISALSG. The N-palmitoyl cysteine moiety is linked to residue cysteine 24. Residue cysteine 24 is the site of S-diacylglycerol cysteine attachment. The stretch at 97 to 151 forms a coiled coil; that stretch reads ATYEADYQSAQANLASTQEQAQRYKLLVADQAVSKQQYADANAAYLQSKAAVEQA.

It belongs to the membrane fusion protein (MFP) (TC 8.A.1) family. Component of the MexAB-OprM multidrug efflux complex, composed of six MexA subunits forming a hexameric tube, binding to a MexB trimer, which interact with the trimeric OprM outer membrane channel protein. OprM is thought to not directly contact MexB; instead, MexA joins MexB and OprM by forming a funnel-like hexamer anchored to the inner membrane. MexA may initially form a hexameric ring complex with MexB prior to OprM, then OprM undergoes a conformational change as it contacts MexA, allowing the periplasmic gate to open. It is thought that, under high intracellular substrate concentration, MexB ejects substrate into the tunnel formed by MexA-OprM; as the substrate level declines, conformational changes in MexB cause efflux to reduce and stop and the complex shifts to the closed state. MexB subunit acts as a substrate:proton antiporter and activity is enhanced significantly when in complex with MexA and OprM, in vitro.

It is found in the cell inner membrane. With respect to regulation, export of antibiotics and solvents is dramatically decreased in the presence of the protonophore carbonyl cyanide m-chlorophenylhydrazone (CCCP), therefore may be driven by a proton gradient. Antibiotic efflux is inhibited by pyridopyrimidine derivatives, such as ABI-PP, acting by binding to a hydrophobic pocket in MexB. The periplasmic linker component of the MexAB-OprM efflux system that confers multidrug resistance. Functions as the major efflux pump for n-hexane and p-xylene efflux. Has been shown in one study to be involved in the active efflux of the autoinducer N-(3-oxododecanoyl) homoserine lactone, thereby playing an indirect role in quorum-sensing; but has been shown in another study not to be involved in efflux of this autoinducer. Over-expression of the pump increases antibiotic and solvent efflux capacities. Implicated in the secretion of the siderophore pyoverdine. This is Multidrug resistance protein MexA (mexA) from Pseudomonas aeruginosa (strain ATCC 15692 / DSM 22644 / CIP 104116 / JCM 14847 / LMG 12228 / 1C / PRS 101 / PAO1).